The chain runs to 253 residues: tRNA pseudouridine synthase A (253 aa).

Residue Asp52 is the Nucleophile of the active site. Tyr110 lines the substrate pocket.

The protein belongs to the tRNA pseudouridine synthase TruA family. Homodimer.

The enzyme catalyses uridine(38/39/40) in tRNA = pseudouridine(38/39/40) in tRNA. Functionally, formation of pseudouridine at positions 38, 39 and 40 in the anticodon stem and loop of transfer RNAs. In Thermus thermophilus (strain ATCC BAA-163 / DSM 7039 / HB27), this protein is tRNA pseudouridine synthase A.